Consider the following 135-residue polypeptide: Protein PsiE homolog (135 aa).

The next 4 helical transmembrane spans lie at 14–34, 54–74, 82–102, and 107–127; these read LQTI…IFLV, YQLI…ALIV, HFPL…LIIV, and PSDT…LYLA.

This sequence belongs to the PsiE family.

The protein resides in the cell inner membrane. The chain is Protein PsiE homolog from Pectobacterium carotovorum subsp. carotovorum (strain PC1).